The following is a 112-amino-acid chain: UPF0122 protein CPE1714 (112 aa).

Belongs to the UPF0122 family.

Might take part in the signal recognition particle (SRP) pathway. This is inferred from the conservation of its genetic proximity to ftsY/ffh. May be a regulatory protein. The chain is UPF0122 protein CPE1714 from Clostridium perfringens (strain 13 / Type A).